Reading from the N-terminus, the 622-residue chain is Mitochondrial distribution and morphology protein 34 (622 aa).

The SMP-LTD domain occupies 1-204; the sequence is MSFKVNWNSL…LPTLIHQLSL (204 aa). Disordered regions lie at residues 362 to 399 and 568 to 592; these read YSNK…PSEL and FDGG…TRNE. Residues 370–384 show a composition bias toward basic residues; it reads KPKRRRIKVHKKNKS. Positions 390–399 are enriched in polar residues; it reads TTTTSKPSEL. Positions 571 to 583 are enriched in low complexity; sequence GKNNNTNDNNSKN.

This sequence belongs to the MDM34 family. As to quaternary structure, component of the ER-mitochondria encounter structure (ERMES) or MDM complex, composed of MMM1, MDM10, MDM12 and MDM34.

It localises to the mitochondrion outer membrane. Its function is as follows. Component of the ERMES/MDM complex, which serves as a molecular tether to connect the endoplasmic reticulum (ER) and mitochondria. Components of this complex are involved in the control of mitochondrial shape and protein biogenesis, and function in nonvesicular lipid trafficking between the ER and mitochondria. MDM34 is required for the interaction of the ER-resident membrane protein MMM1 and the outer mitochondrial membrane-resident beta-barrel protein MDM10. This is Mitochondrial distribution and morphology protein 34 from Candida dubliniensis (strain CD36 / ATCC MYA-646 / CBS 7987 / NCPF 3949 / NRRL Y-17841) (Yeast).